The following is a 142-amino-acid chain: DNA-directed RNA polymerase subunit omega (142 aa).

The tract at residues 104–142 (FNTDADVDQESTDIQDDEVENEMSNQDSEDIDDEVDNEE) is disordered. Positions 108–142 (ADVDQESTDIQDDEVENEMSNQDSEDIDDEVDNEE) are enriched in acidic residues.

This sequence belongs to the RNA polymerase subunit omega family. In terms of assembly, the RNAP catalytic core consists of 2 alpha, 1 beta, 1 beta' and 1 omega subunit. When a sigma factor is associated with the core the holoenzyme is formed, which can initiate transcription.

It catalyses the reaction RNA(n) + a ribonucleoside 5'-triphosphate = RNA(n+1) + diphosphate. In terms of biological role, promotes RNA polymerase assembly. Latches the N- and C-terminal regions of the beta' subunit thereby facilitating its interaction with the beta and alpha subunits. This is DNA-directed RNA polymerase subunit omega from Wolbachia sp. subsp. Brugia malayi (strain TRS).